The following is a 119-amino-acid chain: NADH-quinone oxidoreductase subunit A (119 aa).

3 consecutive transmembrane segments (helical) span residues 7 to 27, 63 to 83, and 88 to 108; these read FPVLLFIIIGVGLGLALMTIG, LIAILFILFDLETAFLFPWGV, and IGWPGFFAMGVFLLEFLVGFV.

It belongs to the complex I subunit 3 family. As to quaternary structure, NDH-1 is composed of 14 different subunits. Subunits NuoA, H, J, K, L, M, N constitute the membrane sector of the complex.

It localises to the cell inner membrane. It catalyses the reaction a quinone + NADH + 5 H(+)(in) = a quinol + NAD(+) + 4 H(+)(out). In terms of biological role, NDH-1 shuttles electrons from NADH, via FMN and iron-sulfur (Fe-S) centers, to quinones in the respiratory chain. The immediate electron acceptor for the enzyme in this species is believed to be ubiquinone. Couples the redox reaction to proton translocation (for every two electrons transferred, four hydrogen ions are translocated across the cytoplasmic membrane), and thus conserves the redox energy in a proton gradient. In Ralstonia nicotianae (strain ATCC BAA-1114 / GMI1000) (Ralstonia solanacearum), this protein is NADH-quinone oxidoreductase subunit A.